A 404-amino-acid chain; its full sequence is Cysteine desulfurase IscS (404 aa).

Residues 75–76, Asn155, Gln183, and 203–205 each bind pyridoxal 5'-phosphate; these read AT and SGH. N6-(pyridoxal phosphate)lysine is present on Lys206. Thr243 provides a ligand contact to pyridoxal 5'-phosphate. Residue Cys328 is the Cysteine persulfide intermediate of the active site. A [2Fe-2S] cluster-binding site is contributed by Cys328.

Belongs to the class-V pyridoxal-phosphate-dependent aminotransferase family. NifS/IscS subfamily. Homodimer. Forms a heterotetramer with IscU, interacts with other sulfur acceptors. Pyridoxal 5'-phosphate is required as a cofactor.

It localises to the cytoplasm. It carries out the reaction (sulfur carrier)-H + L-cysteine = (sulfur carrier)-SH + L-alanine. The protein operates within cofactor biosynthesis; iron-sulfur cluster biosynthesis. Functionally, master enzyme that delivers sulfur to a number of partners involved in Fe-S cluster assembly, tRNA modification or cofactor biosynthesis. Catalyzes the removal of elemental sulfur and selenium atoms from cysteine and selenocysteine to produce alanine. Functions as a sulfur delivery protein for Fe-S cluster synthesis onto IscU, an Fe-S scaffold assembly protein, as well as other S acceptor proteins. Also functions as a selenium delivery protein in the pathway for the biosynthesis of selenophosphate. This is Cysteine desulfurase IscS from Salmonella schwarzengrund (strain CVM19633).